The chain runs to 382 residues: ATP phosphoribosyltransferase regulatory subunit (382 aa).

It belongs to the class-II aminoacyl-tRNA synthetase family. HisZ subfamily. Heteromultimer composed of HisG and HisZ subunits.

The protein localises to the cytoplasm. Its pathway is amino-acid biosynthesis; L-histidine biosynthesis; L-histidine from 5-phospho-alpha-D-ribose 1-diphosphate: step 1/9. Required for the first step of histidine biosynthesis. May allow the feedback regulation of ATP phosphoribosyltransferase activity by histidine. This chain is ATP phosphoribosyltransferase regulatory subunit, found in Acidovorax sp. (strain JS42).